Here is a 219-residue protein sequence, read N- to C-terminus: MTQDELKKAVGWAALDYVRPDTIVGVGTGSTAAHFIDALGSIKHQIKGAVSSSDASTEKLKSLGIPVFDANEVDSLDVYVDGADEINGHMQMIKGGGAALTREKIISALSRQFICIVDASKQVDVLGKFPLPVEVIPMARSYVARELVKLGGQPVYRQGVVTDNGNVILDVHNLNIMDAIAVENHINGIPGVVTVGLFANRGADVALVGTSEGVKTVVK.

Substrate contacts are provided by residues 28–31 (TGST), 81–84 (DGAD), and 94–97 (KGGG). The active-site Proton acceptor is the E103. Residue K121 coordinates substrate.

It belongs to the ribose 5-phosphate isomerase family. As to quaternary structure, homodimer.

The enzyme catalyses aldehydo-D-ribose 5-phosphate = D-ribulose 5-phosphate. Its pathway is carbohydrate degradation; pentose phosphate pathway; D-ribose 5-phosphate from D-ribulose 5-phosphate (non-oxidative stage): step 1/1. Catalyzes the reversible conversion of ribose-5-phosphate to ribulose 5-phosphate. This Pectobacterium carotovorum subsp. carotovorum (strain PC1) protein is Ribose-5-phosphate isomerase A.